Consider the following 1060-residue polypeptide: Carbamoyl phosphate synthase large chain (1060 aa).

Residues 1–401 (MPKRTDIRKI…SLLKACRSLE (401 aa)) form a carboxyphosphate synthetic domain region. The ATP site is built by arginine 129, arginine 169, glycine 175, glycine 176, arginine 208, isoleucine 210, glutamate 215, glycine 241, isoleucine 242, histidine 243, glutamine 284, and glutamate 298. The ATP-grasp 1 domain occupies 133 to 327 (KQLMEELNQP…IAKLAAKIAV (195 aa)). 3 residues coordinate Mg(2+): glutamine 284, glutamate 298, and asparagine 300. Mn(2+) is bound by residues glutamine 284, glutamate 298, and asparagine 300. Positions 402-546 (IGVDHIKIAD…YSTYAVENES (145 aa)) are oligomerization domain. Residues 547 to 929 (LISDKASILV…ALYKAFEAAY (383 aa)) form a carbamoyl phosphate synthetic domain region. The ATP-grasp 2 domain occupies 671-861 (EATLQALNIP…MAQVATKVIL (191 aa)). The ATP site is built by arginine 707, alanine 746, leucine 748, glutamate 752, glycine 777, valine 778, histidine 779, serine 780, glutamine 820, and glutamate 832. Positions 820, 832, and 834 each coordinate Mg(2+). Mn(2+) contacts are provided by glutamine 820, glutamate 832, and asparagine 834. The region spanning 930 to 1060 (LHMPDYGNIV…SRAFTLKVLD (131 aa)) is the MGS-like domain. The interval 930-1060 (LHMPDYGNIV…SRAFTLKVLD (131 aa)) is allosteric domain.

The protein belongs to the CarB family. In terms of assembly, composed of two chains; the small (or glutamine) chain promotes the hydrolysis of glutamine to ammonia, which is used by the large (or ammonia) chain to synthesize carbamoyl phosphate. Tetramer of heterodimers (alpha,beta)4. The cofactor is Mg(2+). It depends on Mn(2+) as a cofactor.

It catalyses the reaction hydrogencarbonate + L-glutamine + 2 ATP + H2O = carbamoyl phosphate + L-glutamate + 2 ADP + phosphate + 2 H(+). The catalysed reaction is hydrogencarbonate + NH4(+) + 2 ATP = carbamoyl phosphate + 2 ADP + phosphate + 2 H(+). It participates in amino-acid biosynthesis; L-arginine biosynthesis; carbamoyl phosphate from bicarbonate: step 1/1. Its pathway is pyrimidine metabolism; UMP biosynthesis via de novo pathway; (S)-dihydroorotate from bicarbonate: step 1/3. Functionally, large subunit of the glutamine-dependent carbamoyl phosphate synthetase (CPSase). CPSase catalyzes the formation of carbamoyl phosphate from the ammonia moiety of glutamine, carbonate, and phosphate donated by ATP, constituting the first step of 2 biosynthetic pathways, one leading to arginine and/or urea and the other to pyrimidine nucleotides. The large subunit (synthetase) binds the substrates ammonia (free or transferred from glutamine from the small subunit), hydrogencarbonate and ATP and carries out an ATP-coupled ligase reaction, activating hydrogencarbonate by forming carboxy phosphate which reacts with ammonia to form carbamoyl phosphate. The polypeptide is Carbamoyl phosphate synthase large chain (Streptococcus agalactiae serotype Ia (strain ATCC 27591 / A909 / CDC SS700)).